The sequence spans 363 residues: tRNA/tmRNA (uracil-C(5))-methyltransferase (363 aa).

The S-adenosyl-L-methionine site is built by glutamine 187, tyrosine 215, asparagine 220, glutamate 236, and aspartate 296. The active-site Nucleophile is cysteine 321. The Proton acceptor role is filled by glutamate 355.

This sequence belongs to the class I-like SAM-binding methyltransferase superfamily. RNA M5U methyltransferase family. TrmA subfamily.

It carries out the reaction uridine(54) in tRNA + S-adenosyl-L-methionine = 5-methyluridine(54) in tRNA + S-adenosyl-L-homocysteine + H(+). The catalysed reaction is uridine(341) in tmRNA + S-adenosyl-L-methionine = 5-methyluridine(341) in tmRNA + S-adenosyl-L-homocysteine + H(+). In terms of biological role, dual-specificity methyltransferase that catalyzes the formation of 5-methyluridine at position 54 (m5U54) in all tRNAs, and that of position 341 (m5U341) in tmRNA (transfer-mRNA). The sequence is that of tRNA/tmRNA (uracil-C(5))-methyltransferase from Pseudomonas paraeruginosa (strain DSM 24068 / PA7) (Pseudomonas aeruginosa (strain PA7)).